The chain runs to 199 residues: Pneumococcal vaccine antigen A homolog (199 aa).

The protein localises to the cell surface. The sequence is that of Pneumococcal vaccine antigen A homolog (pvaA) from Streptococcus pyogenes serotype M6 (strain ATCC BAA-946 / MGAS10394).